The sequence spans 1074 residues: MKGACILAWLFSSLGVWRLARPETQDPAKCQRAEHPVVSYKEIGPWLREFRAENAVDFSRLTFDPGQKELVVGARNYLFRLQLEDLSLIQAVQWECDEATKKACYSKGKSKEECQNYIRVLLVGGDRLFTCGTNAFTPVCTIRSLSNLTEIHDQISGMARCPYSPQHNSTALLTASGELYAATAMDFPGRDPAIYRSLGTLPPLRTAQYNSKWLNEPNFVSSYDIGNFTYFFFRENAVEHDCGKTVFSRAARVCKNDIGGRFLLEDTWTTFMKARLNCSRPGEVPFYYNELQSTFFLPELDLIYGIFTTNVNSIAASAVCVFNLSAISQAFNGPFKYQENSRSAWLPYPNPNPNFQCGTMDQGLYVNLTERNLQDAQKFILMHEVVQPVTTVPSFMEDNSRFSHVAVDVVQGRDTLVHIIYLATDYGTIKKVRAPLSQSSGSCLLEEIELFPERKSEPIRSLKILHSQSVLFVGLQEHVVKIPLKRCHFHQTRGACIGAQDPYCGWDAVMKKCTSLEESLSMTQWDQSVPTCPTRNLTVDGSFGPWSPWTPCTHTDGTAVGSCLCRSRSCDSPAPQCGGWQCEGPRMEITNCSRNGGWTPWTSWSPCSTTCGIGFQVRQRSCSNPTPRHGGRVCVGQNREERYCNEHLLCPPHVFWTGWGPWERCTAQCGGGIQARRRTCENGPDCAGCNVEYQPCNTNACPELKKTTPWTPWTPVNISDNGGHYEQRFRYTCKARLPDPNLLEVGRQRIEMRYCSSDGTSGCSTDGLSGDFLRAGRYSAHTVNGAWSAWTSWSQCSRDCSRGIRNRKRVCNNPEPKYGGMPCLGPSLEFQECNILPCPVDGVWSCWSSWSKCSATCGGGHYMRTRSCTNPAPAYGGDICLGLHTEEALCNTQTCPENWSEWSEWSVCDASGTQVRTRQCILLFPVGSQCSGNTTESRPCVFDSNFIPEVSVARSSSVEEKRCGEFNMFHMMAVGLSSSILGCLLTLLVYTYCQRYQQQSHDATVIHPVSPAALNSSITNHINKLDKYDSVEAIKAFNKNNLILEERNKYFNPHLTGKTYSNAYFTDLNNYDEY.

Positions 1–22 are cleaved as a signal peptide; that stretch reads MKGACILAWLFSSLGVWRLARP. The Sema domain occupies 35 to 484; that stretch reads HPVVSYKEIG…LQEHVVKIPL (450 aa). Disulfide bonds link C104–C114 and C131–C140. N-linked (GlcNAc...) asparagine glycosylation is found at N147, N168, N227, and N277. Cystine bridges form between C254/C357 and C278/C320. N-linked (GlcNAc...) asparagine glycosylation is found at N323 and N367. Residues 486-533 form the PSI domain; the sequence is RCHFHQTRGACIGAQDPYCGWDAVMKKCTSLEESLSMTQWDQSVPTCP. Residues N536 and N591 are each glycosylated (N-linked (GlcNAc...) asparagine). TSP type-1 domains lie at 540–593, 595–651, and 653–702; these read DGSF…TNCS, NGGW…LLCP, and HVFW…NACP. Disulfide bonds link C607–C644, C611–C650, C622–C634, C665–C696, C669–C701, and C680–C686. N-linked (GlcNAc...) asparagine glycosylation is present at N717. TSP type-1 domains are found at residues 784–839, 841–896, and 897–944; these read NGAW…LPCP, DGVW…QTCP, and ENWS…VFDS. Intrachain disulfides connect C796/C833, C800/C838, C811/C823, C853/C890, C857/C895, and C868/C880. N-linked (GlcNAc...) asparagine glycans are attached at residues N898 and N933. Residues 969 to 989 traverse the membrane as a helical segment; it reads FHMMAVGLSSSILGCLLTLLV. N1015 carries N-linked (GlcNAc...) asparagine glycosylation.

In terms of assembly, binds PLXNB3.

It localises to the membrane. In terms of biological role, bifunctional axonal guidance cue regulated by sulfated proteoglycans; attractive effects result from interactions with heparan sulfate proteoglycans (HSPGs), while the inhibitory effects depend on interactions with chondroitin sulfate proteoglycans (CSPGs). Ligand for receptor PLXNB3. In glioma cells, SEMA5A stimulation of PLXNB3 results in the disassembly of F-actin stress fibers, disruption of focal adhesions and cellular collapse as well as inhibition of cell migration and invasion through ARHGDIA-mediated inactivation of RAC1. May promote angiogenesis by increasing endothelial cell proliferation and migration and inhibiting apoptosis. The polypeptide is Semaphorin-5A (Sema5a) (Rattus norvegicus (Rat)).